A 307-amino-acid chain; its full sequence is Holliday junction branch migration complex subunit RuvB (307 aa).

The tract at residues 1–167 (MKLQIKPPNN…FGMILNIDYY (167 aa)) is large ATPase domain (RuvB-L). ATP is bound by residues I5, G48, K51, T52, T53, 114–116 (DDF), R157, Y167, and R204. T52 contacts Mg(2+). A small ATPAse domain (RuvB-S) region spans residues 168–233 (SNQEIERIVS…DLAALFKSLM (66 aa)). The interval 236 to 307 (KNGLQSIDVQ…RTGRNYLTSC (72 aa)) is head domain (RuvB-H). The DNA site is built by K289 and R294.

This sequence belongs to the RuvB family. As to quaternary structure, homohexamer. Forms an RuvA(8)-RuvB(12)-Holliday junction (HJ) complex. HJ DNA is sandwiched between 2 RuvA tetramers; dsDNA enters through RuvA and exits via RuvB. An RuvB hexamer assembles on each DNA strand where it exits the tetramer. Each RuvB hexamer is contacted by two RuvA subunits (via domain III) on 2 adjacent RuvB subunits; this complex drives branch migration. In the full resolvosome a probable DNA-RuvA(4)-RuvB(12)-RuvC(2) complex forms which resolves the HJ.

It localises to the cytoplasm. It catalyses the reaction ATP + H2O = ADP + phosphate + H(+). Its function is as follows. The RuvA-RuvB-RuvC complex processes Holliday junction (HJ) DNA during genetic recombination and DNA repair, while the RuvA-RuvB complex plays an important role in the rescue of blocked DNA replication forks via replication fork reversal (RFR). RuvA specifically binds to HJ cruciform DNA, conferring on it an open structure. The RuvB hexamer acts as an ATP-dependent pump, pulling dsDNA into and through the RuvAB complex. RuvB forms 2 homohexamers on either side of HJ DNA bound by 1 or 2 RuvA tetramers; 4 subunits per hexamer contact DNA at a time. Coordinated motions by a converter formed by DNA-disengaged RuvB subunits stimulates ATP hydrolysis and nucleotide exchange. Immobilization of the converter enables RuvB to convert the ATP-contained energy into a lever motion, pulling 2 nucleotides of DNA out of the RuvA tetramer per ATP hydrolyzed, thus driving DNA branch migration. The RuvB motors rotate together with the DNA substrate, which together with the progressing nucleotide cycle form the mechanistic basis for DNA recombination by continuous HJ branch migration. Branch migration allows RuvC to scan DNA until it finds its consensus sequence, where it cleaves and resolves cruciform DNA. In Mycoplasma pneumoniae (strain ATCC 29342 / M129 / Subtype 1) (Mycoplasmoides pneumoniae), this protein is Holliday junction branch migration complex subunit RuvB.